A 172-amino-acid chain; its full sequence is Small ribosomal subunit protein uS5c (172 aa).

The region spanning 15-78 (WEEKVVQVKR…TDAKKHIINV (64 aa)) is the S5 DRBM domain.

This sequence belongs to the universal ribosomal protein uS5 family. As to quaternary structure, part of the 30S ribosomal subunit. Contacts protein S4.

Its subcellular location is the plastid. The protein localises to the chloroplast. Functionally, with S4 and S12 plays an important role in translational accuracy. The polypeptide is Small ribosomal subunit protein uS5c (rps5) (Gracilaria tenuistipitata var. liui (Red alga)).